The following is a 347-amino-acid chain: Histone deacetylase 11 (347 aa).

Positions T14–G326 are histone deacetylase. H143 is a catalytic residue.

Belongs to the histone deacetylase family. In terms of assembly, interacts with HDAC6. Weakly expressed in most tissues. Strongly expressed in brain, heart, skeletal muscle, kidney and testis.

Its subcellular location is the nucleus. The enzyme catalyses N(6)-acetyl-L-lysyl-[histone] + H2O = L-lysyl-[histone] + acetate. In terms of biological role, responsible for the deacetylation of lysine residues on the N-terminal part of the core histones (H2A, H2B, H3 and H4). Histone deacetylation gives a tag for epigenetic repression and plays an important role in transcriptional regulation, cell cycle progression and developmental events. Histone deacetylases act via the formation of large multiprotein complexes. This is Histone deacetylase 11 (HDAC11) from Homo sapiens (Human).